A 198-amino-acid polypeptide reads, in one-letter code: MTTILQINSAARSQGAQSTLLADELTAKLQQGNPGATVKVRNLLADALPHLDDAVLGAFFTPADQRSAEQNAIVAKSDELVDELRSADVIVIGAPMYNFGVSSQLKAYFDWIARAGVTFRYTSEGPEGLIKGKKAYVVSARGGKHVGMPTDSQTPFLKTFLGFIGLTDVTFVYAEGLALGPDAATEALASAREAIAAV.

FMN is bound at residue 96 to 99; it reads MYNF.

This sequence belongs to the azoreductase type 1 family. In terms of assembly, homodimer. FMN serves as cofactor.

The catalysed reaction is 2 a quinone + NADH + H(+) = 2 a 1,4-benzosemiquinone + NAD(+). The enzyme catalyses N,N-dimethyl-1,4-phenylenediamine + anthranilate + 2 NAD(+) = 2-(4-dimethylaminophenyl)diazenylbenzoate + 2 NADH + 2 H(+). Its function is as follows. Quinone reductase that provides resistance to thiol-specific stress caused by electrophilic quinones. Functionally, also exhibits azoreductase activity. Catalyzes the reductive cleavage of the azo bond in aromatic azo compounds to the corresponding amines. In Burkholderia mallei (strain ATCC 23344), this protein is FMN-dependent NADH:quinone oxidoreductase.